We begin with the raw amino-acid sequence, 316 residues long: tRNA dimethylallyltransferase (316 aa).

ATP is bound at residue 17-24 (GPTASGKT). 19–24 (TASGKT) provides a ligand contact to substrate. Interaction with substrate tRNA stretches follow at residues 42–45 (DSAL), 166–170 (QRLSR), 247–252 (RCVGYR), and 280–287 (KRQITWLR).

The protein belongs to the IPP transferase family. Monomer. Mg(2+) is required as a cofactor.

The catalysed reaction is adenosine(37) in tRNA + dimethylallyl diphosphate = N(6)-dimethylallyladenosine(37) in tRNA + diphosphate. In terms of biological role, catalyzes the transfer of a dimethylallyl group onto the adenine at position 37 in tRNAs that read codons beginning with uridine, leading to the formation of N6-(dimethylallyl)adenosine (i(6)A). The sequence is that of tRNA dimethylallyltransferase from Escherichia coli O45:K1 (strain S88 / ExPEC).